We begin with the raw amino-acid sequence, 143 residues long: Putative complexin-1 (143 aa).

Positions 16-72 are disordered; sequence EVTGGLGMKDDGGEKTETGEDPEVIAARLEQEERRKEKHRKMENEREKMRQGIRDKY. Composition is skewed to basic and acidic residues over residues 23–33 and 44–72; these read MKDDGGEKTET and LEQE…RDKY. Positions 40-71 form a coiled coil; the sequence is IAARLEQEERRKEKHRKMENEREKMRQGIRDK.

Belongs to the complexin/synaphin family.

The protein resides in the cytoplasm. It is found in the cytosol. Functionally, positively regulates a late step in synaptic vesicle exocytosis. This chain is Putative complexin-1 (cpx-1), found in Caenorhabditis elegans.